A 506-amino-acid polypeptide reads, in one-letter code: CDK5 regulatory subunit-associated protein 3 (506 aa).

Short sequence motifs (shuffled ATG8-binding motif) lie at residues isoleucine 267–glycine 270, isoleucine 292–glycine 295, and isoleucine 310–glycine 313. The segment at tryptophan 269–leucine 506 is required for interaction with UFL1 and mediates interaction with CHEK1. Residues aspartate 355 to glutamate 370 form an RPL10a-binding domain (RBD) region. Lysine 450 is covalently cross-linked (Glycyl lysine isopeptide (Lys-Gly) (interchain with G-Cter in SUMO2)).

It belongs to the CDK5RAP3 family. Substrate adapter component of the UFM1 ribosome E3 ligase (UREL) complex, composed of UFL1, DDRGK1 and CDK5RAP3. Interaction with UFL1 anchors CDK5RAP3 in the cytoplasm, preventing its translocation to the nucleus which allows expression of the CCND1 cyclin and progression of cells through the G1/S transition. Interacts with ATG8 family proteins MAP1LC3A, MAP1LC3B, GABARAP, GABARAPL1 and GABARAPL2. Interacts with CDK5R1; competes with CDK5RAP1 and CDK5RAP2. Interacts with RELA. Interacts with CHEK1; may negatively regulate CHEK1 and thereby stimulate entry into mitosis. Interacts with CDKN2A/ARF and MDM2; forms a ternary complex involved in regulation of p53/TP53. Interacts with MAPK14. Interacts with CCNB1. Interacts with TUBG1; may regulate CDK5RAP3 in mitotic G2/M transition checkpoint. In terms of processing, may be phosphorylated by CDK5. Ubiquitinated. Probably triggers proteasomal degradation and is negatively regulated by UFL1. Post-translationally, may be ufmylated. In terms of processing, cleaved by caspases early during apoptosis, the resulting peptides may play a role in rupture of the nuclear envelope.

The protein localises to the endoplasmic reticulum membrane. It localises to the cytoplasm. Its subcellular location is the nucleus. The protein resides in the cytoskeleton. It is found in the microtubule organizing center. The protein localises to the centrosome. Its function is as follows. Substrate adapter of E3 ligase complexes mediating ufmylation, the covalent attachment of the ubiquitin-like modifier UFM1 to substrate proteins, and which is involved in various processes, such as ribosome recycling and reticulophagy (also called ER-phagy). As part of the UREL complex, plays a key role in ribosome recycling by promoting mono-ufmylation of RPL26/uL24 subunit of the 60S ribosome. Ufmylation of RPL26/uL24 occurs on free 60S ribosomes following ribosome dissociation: it weakens the junction between post-termination 60S subunits and SEC61 translocons, promoting release and recycling of the large ribosomal subunit from the endoplasmic reticulum membrane. Ufmylation of RPL26/uL24 and subsequent 60S ribosome recycling either take place after normal termination of translation or after ribosome stalling during cotranslational translocation at the endoplasmic reticulum. Within the UREL complex, CDK5RAP3 acts as a substrate adapter that constrains UFL1 ligase activity to mono-ufmylate RPL26/uL24 at 'Lys-134'. The UREL complex is also involved in reticulophagy in response to endoplasmic reticulum stress by promoting ufmylation of proteins such as CYB5R3, thereby promoting lysosomal degradation of ufmylated proteins. Also acts as a regulator of transcription: negatively regulates NF-kappa-B-mediated gene transcription through the control of RELA phosphorylation. Also regulates mitotic G2/M transition checkpoint and mitotic G2 DNA damage checkpoint. Through its interaction with CDKN2A/ARF and MDM2 may induce MDM2-dependent p53/TP53 ubiquitination, stabilization and activation in the nucleus, thereby promoting G1 cell cycle arrest and inhibition of cell proliferation. May also play a role in the rupture of the nuclear envelope during apoptosis. May regulate MAPK14 activity by regulating its dephosphorylation by PPM1D/WIP1. Required for liver development. The sequence is that of CDK5 regulatory subunit-associated protein 3 from Pongo abelii (Sumatran orangutan).